The primary structure comprises 211 residues: SAGA-associated factor 11 homolog 2 (211 aa).

The SGF11-type zinc-finger motif lies at 115-136 (CTCPNCDRLVAAARFAPHLEKC). Residues 149–211 (RRLATKEGSS…GSKKNNGKTF (63 aa)) form a disordered region. The span at 157-166 (SSASTSSTST) shows a compositional bias: low complexity. Serine 187 carries the phosphoserine modification. Residues 197–211 (SSRNNGSKKNNGKTF) show a composition bias toward low complexity.

This sequence belongs to the SGF11 family. As to quaternary structure, component of some SAGA transcription coactivator-HAT complexes, at least composed of Ada2b, not/nonstop, Pcaf/Gcn5, Sgf11 and Spt3. Within the SAGA complex, Sgf11, e(y)2, and not/nonstop form an additional subcomplex of SAGA called the DUB module (deubiquitination module). Interacts directly with not/nonstop. Interacts with the AMEX complex component xmas-2. Interacts with Cbp80; important for promoter recruitment of Sgf11 that is not associated with the DUB module.

It is found in the nucleus. Its subcellular location is the nucleoplasm. The protein resides in the cytoplasm. Functionally, component of the transcription regulatory histone acetylation (HAT) complex SAGA, a multiprotein complex that activates transcription by remodeling chromatin and mediating histone acetylation and deubiquitination. Within the SAGA complex, participates in a subcomplex that specifically deubiquitinates histone H2B. The SAGA complex is recruited to specific gene promoters by activators, where it is required for transcription. Required for nuclear receptor-mediated transactivation. Binds independently on SAGA to promoters in an RNA-dependent manner. Binds to mRNA and is essential for total mRNA export from the nucleus. Required to counteract heterochromatin silencing. Controls the development of neuronal connectivity in visual system by being required for accurate axon targeting in the optic lobe. Required for expression of ecdysone-induced genes such as br/broad. The chain is SAGA-associated factor 11 homolog 2 from Drosophila grimshawi (Hawaiian fruit fly).